Consider the following 426-residue polypeptide: Elongation factor 1-alpha (426 aa).

In terms of domain architecture, tr-type G spans 5 to 221 (KPHMNLAVIG…DTFKEPDKPT (217 aa)). The G1 stretch occupies residues 14–21 (GHIDHGKS). GTP is bound at residue 14–21 (GHIDHGKS). Serine 21 provides a ligand contact to Mg(2+). The tract at residues 70 to 74 (GITID) is G2. The segment at 91–94 (DCPG) is G3. Residues 91 to 95 (DCPGH) and 146 to 149 (NKMD) contribute to the GTP site. Positions 146-149 (NKMD) are G4. The tract at residues 185 to 187 (SSF) is G5.

The protein belongs to the TRAFAC class translation factor GTPase superfamily. Classic translation factor GTPase family. EF-Tu/EF-1A subfamily.

The protein localises to the cytoplasm. It carries out the reaction GTP + H2O = GDP + phosphate + H(+). In terms of biological role, GTP hydrolase that promotes the GTP-dependent binding of aminoacyl-tRNA to the A-site of ribosomes during protein biosynthesis. This is Elongation factor 1-alpha from Methanosphaerula palustris (strain ATCC BAA-1556 / DSM 19958 / E1-9c).